The primary structure comprises 549 residues: Probable protein kinase UbiB (549 aa).

A Protein kinase domain is found at 123-501 (DFNETPLASA…QQQAHKSNYL (379 aa)). Residues 129–137 (LASASISQV) and Lys-152 each bind ATP. Asp-287 (proton acceptor) is an active-site residue. 2 helical membrane passes run 498–518 (SNYLLITSAILLICGTLLFNQ) and 520–540 (ATLWSPYVCLISGAALWIIGW).

It belongs to the ABC1 family. UbiB subfamily.

The protein localises to the cell inner membrane. Its pathway is cofactor biosynthesis; ubiquinone biosynthesis [regulation]. Its function is as follows. Is probably a protein kinase regulator of UbiI activity which is involved in aerobic coenzyme Q (ubiquinone) biosynthesis. This Shewanella sp. (strain MR-4) protein is Probable protein kinase UbiB.